A 398-amino-acid chain; its full sequence is S-adenosylmethionine synthase (398 aa).

H17 is a binding site for ATP. D19 provides a ligand contact to Mg(2+). E45 is a binding site for K(+). E58 and Q101 together coordinate L-methionine. Positions 101 to 111 (QSPDIAQGVDK) are flexible loop. ATP contacts are provided by residues 176 to 178 (DGK), 243 to 244 (RF), D252, 258 to 259 (RK), and K279. D252 contacts L-methionine. L-methionine is bound at residue K283.

Belongs to the AdoMet synthase family. In terms of assembly, homotetramer; dimer of dimers. Mg(2+) serves as cofactor. The cofactor is K(+).

The protein localises to the cytoplasm. It catalyses the reaction L-methionine + ATP + H2O = S-adenosyl-L-methionine + phosphate + diphosphate. It participates in amino-acid biosynthesis; S-adenosyl-L-methionine biosynthesis; S-adenosyl-L-methionine from L-methionine: step 1/1. In terms of biological role, catalyzes the formation of S-adenosylmethionine (AdoMet) from methionine and ATP. The overall synthetic reaction is composed of two sequential steps, AdoMet formation and the subsequent tripolyphosphate hydrolysis which occurs prior to release of AdoMet from the enzyme. The sequence is that of S-adenosylmethionine synthase from Staphylococcus haemolyticus (strain JCSC1435).